The primary structure comprises 377 residues: Opsin-2 (377 aa).

Residues 1–57 lie on the Extracellular side of the membrane; that stretch reads MNNQSENYYHGAQFEALKSAGAIEMLGDGLTGDDLAAIPEHWLSYPAPPASAHTALA. The N-linked (GlcNAc...) asparagine glycan is linked to Asn3. The chain crosses the membrane as a helical span at residues 58–78; that stretch reads LLYIFFTFAALVGNGMVIFIF. The Cytoplasmic portion of the chain corresponds to 79–89; it reads STTKSLRTSSN. Residues 90-110 form a helical membrane-spanning segment; sequence FLVLNLAILDFIMMAKAPIFI. At 111-126 the chain is on the extracellular side; the sequence is YNSAMRGFAVGTVGCQ. The cysteines at positions 125 and 202 are disulfide-linked. A helical membrane pass occupies residues 127–146; that stretch reads IFALMGAYSGIGAGMTNACI. Residues 147–166 are Cytoplasmic-facing; it reads AYDRHSTITRPLDGRLSEGK. A helical transmembrane segment spans residues 167–187; the sequence is VLLMVAFVWIYSTPWALLPLL. Topologically, residues 188 to 214 are extracellular; that stretch reads KIWGRYVPEGYLTSCSFDYLTNTFDTK. A helical membrane pass occupies residues 215-235; it reads LFVACIFTCSYVFPMSLIIYF. Topologically, residues 236–283 are cytoplasmic; it reads YSGIVKQVFAHEAALREQAKKMNVESLRANQGGSSESAEIRIAKAALT. A helical transmembrane segment spans residues 284-304; the sequence is VCFLFVASWTPYGVMALIGAF. The Extracellular segment spans residues 305-314; the sequence is GNQQLLTPGV. A helical transmembrane segment spans residues 315-335; that stretch reads TMIPAVACKAVACISPWVYAI. The Cytoplasmic portion of the chain corresponds to 336–377; sequence RHPMYRQELQRRMPWLQIDEPDDTVSTATSNTTNSAPPAATA. Positions 355–377 are disordered; the sequence is EPDDTVSTATSNTTNSAPPAATA. Residues 361 to 377 show a composition bias toward low complexity; that stretch reads STATSNTTNSAPPAATA.

It belongs to the G-protein coupled receptor 1 family. Opsin subfamily. In terms of tissue distribution, in the retina, expression is essentially uniformly distributed, but a higher level is seen in the dorsal region of the retina and in the dorsal rim retinulae.

Its subcellular location is the membrane. Functionally, visual pigments are the light-absorbing molecules that mediate vision. They consist of an apoprotein, opsin, covalently linked to cis-retinal. May play a role in photoperiodic photoreception. The sequence is that of Opsin-2 (OP2) from Manduca sexta (Tobacco hawkmoth).